Reading from the N-terminus, the 572-residue chain is Probable serine/threonine-protein kinase At1g54610 (572 aa).

Residues 1-89 are disordered; sequence MGCVFGREAA…SNPSKHWRGE (89 aa). Over residues 9-40 the composition is skewed to low complexity; the sequence is AATTTTAEAKQAKSSKASSGVVVVGESSVTKS. A compositionally biased stretch (basic and acidic residues) spans 47–67; sequence DVEKKKNEEANGDKERKSSKG. Positions 74–83 are enriched in polar residues; the sequence is KPNPRLSNPS. Residues 118–402 enclose the Protein kinase domain; it reads FEKIDKIGQG…ASAALKSEFF (285 aa). ATP contacts are provided by residues 124–132 and K147; that span reads IGQGTYSNV. Catalysis depends on D242, which acts as the Proton acceptor. Disordered regions lie at residues 409-474 and 526-572; these read CEPA…NVDR and SSFN…AVVA. Basic and acidic residues predominate over residues 419–434; that stretch reads PSKEIDAKRRDEETRR. A compositionally biased stretch (basic residues) spans 554 to 572; that stretch reads SRKKKDNTKSSKGKRAVVA.

This sequence belongs to the protein kinase superfamily. Ser/Thr protein kinase family.

It catalyses the reaction L-seryl-[protein] + ATP = O-phospho-L-seryl-[protein] + ADP + H(+). It carries out the reaction L-threonyl-[protein] + ATP = O-phospho-L-threonyl-[protein] + ADP + H(+). The protein is Probable serine/threonine-protein kinase At1g54610 of Arabidopsis thaliana (Mouse-ear cress).